The primary structure comprises 376 residues: Mitochondrial distribution and morphology protein 34 (376 aa).

The 194-residue stretch at Met-1–Gln-194 folds into the SMP-LTD domain. Disordered regions lie at residues Ser-207 to Val-249 and Ser-286 to Ser-376. Over residues Glu-218 to Glu-230 the composition is skewed to acidic residues. Over residues Val-306–Gly-318 the composition is skewed to basic residues. Residues Met-350–Arg-362 are compositionally biased toward basic and acidic residues.

This sequence belongs to the MDM34 family. As to quaternary structure, component of the ER-mitochondria encounter structure (ERMES) or MDM complex, composed of MMM1, MDM10, MDM12 and MDM34.

It localises to the mitochondrion outer membrane. Its function is as follows. Component of the ERMES/MDM complex, which serves as a molecular tether to connect the endoplasmic reticulum (ER) and mitochondria. Components of this complex are involved in the control of mitochondrial shape and protein biogenesis, and function in nonvesicular lipid trafficking between the ER and mitochondria. MDM34 is required for the interaction of the ER-resident membrane protein MMM1 and the outer mitochondrial membrane-resident beta-barrel protein MDM10. The polypeptide is Mitochondrial distribution and morphology protein 34 (Laccaria bicolor (strain S238N-H82 / ATCC MYA-4686) (Bicoloured deceiver)).